The sequence spans 572 residues: Dihydroxy-acid dehydratase (572 aa).

C57 contributes to the [2Fe-2S] cluster binding site. Residue D89 participates in Mg(2+) binding. [2Fe-2S] cluster is bound at residue C130. Mg(2+) contacts are provided by D131 and K132. An N6-carboxylysine modification is found at K132. Residue C202 participates in [2Fe-2S] cluster binding. Residue E453 participates in Mg(2+) binding. The Proton acceptor role is filled by S479.

This sequence belongs to the IlvD/Edd family. Homodimer. Requires [2Fe-2S] cluster as cofactor. Mg(2+) serves as cofactor.

It catalyses the reaction (2R)-2,3-dihydroxy-3-methylbutanoate = 3-methyl-2-oxobutanoate + H2O. The catalysed reaction is (2R,3R)-2,3-dihydroxy-3-methylpentanoate = (S)-3-methyl-2-oxopentanoate + H2O. It participates in amino-acid biosynthesis; L-isoleucine biosynthesis; L-isoleucine from 2-oxobutanoate: step 3/4. Its pathway is amino-acid biosynthesis; L-valine biosynthesis; L-valine from pyruvate: step 3/4. Its function is as follows. Functions in the biosynthesis of branched-chain amino acids. Catalyzes the dehydration of (2R,3R)-2,3-dihydroxy-3-methylpentanoate (2,3-dihydroxy-3-methylvalerate) into 2-oxo-3-methylpentanoate (2-oxo-3-methylvalerate) and of (2R)-2,3-dihydroxy-3-methylbutanoate (2,3-dihydroxyisovalerate) into 2-oxo-3-methylbutanoate (2-oxoisovalerate), the penultimate precursor to L-isoleucine and L-valine, respectively. The chain is Dihydroxy-acid dehydratase from Streptococcus sanguinis (strain SK36).